Consider the following 397-residue polypeptide: Elongation factor Tu (397 aa).

Residues 10 to 207 form the tr-type G domain; sequence KPHVNIGTIG…VLDEYVKEPV (198 aa). The G1 stretch occupies residues 19–26; it reads GHIDHGKT. 19–26 is a binding site for GTP; the sequence is GHIDHGKT. Thr26 serves as a coordination point for Mg(2+). Positions 60–64 are G2; sequence GITIS. The interval 81-84 is G3; it reads DCPG. Residues 81 to 85 and 136 to 139 each bind GTP; these read DCPGH and NKCD. The segment at 136-139 is G4; sequence NKCD. Residues 174 to 176 form a G5 region; sequence SAL.

This sequence belongs to the TRAFAC class translation factor GTPase superfamily. Classic translation factor GTPase family. EF-Tu/EF-1A subfamily. In terms of assembly, monomer.

The protein resides in the cytoplasm. The enzyme catalyses GTP + H2O = GDP + phosphate + H(+). Its function is as follows. GTP hydrolase that promotes the GTP-dependent binding of aminoacyl-tRNA to the A-site of ribosomes during protein biosynthesis. The polypeptide is Elongation factor Tu (Desulforapulum autotrophicum (strain ATCC 43914 / DSM 3382 / VKM B-1955 / HRM2) (Desulfobacterium autotrophicum)).